Here is a 171-residue protein sequence, read N- to C-terminus: Putative antiporter subunit mnhG2 (171 aa).

A run of 3 helical transmembrane segments spans residues 11–31, 51–71, and 72–92; these read IAAL…IGIV, VLLT…FFSV, and RLLL…HLVA. Over residues 144-156 the composition is skewed to basic and acidic residues; the sequence is DVQKQRQKEKQQE. The tract at residues 144–171 is disordered; sequence DVQKQRQKEKQQEENIESLSEARRETKD.

This sequence belongs to the CPA3 antiporters (TC 2.A.63) subunit G family. As to quaternary structure, may form a heterooligomeric complex that consists of seven subunits: mnhA2, mnhB2, mnhC2, mnhD2, mnhE2, mnhF2 and mnhG2.

The protein resides in the cell membrane. This chain is Putative antiporter subunit mnhG2 (mnhG2), found in Staphylococcus haemolyticus (strain JCSC1435).